A 130-amino-acid chain; its full sequence is Small ribosomal subunit protein uS8 (130 aa).

It belongs to the universal ribosomal protein uS8 family.

The sequence is that of Small ribosomal subunit protein uS8 (rps22) from Agaricus bisporus (White button mushroom).